The sequence spans 457 residues: MRYLCRAQLLSLLLLPLLKARLSVPAHPIPKIFLPLMISTWNYTDANREAWTVLRQGPRRTRQAVIQGCLHCQNSNSCGRLLGGHSAPDSSGGITLEAALIDGANMDYGAVAGMAGIRNAIGVAHDVLRYTNHSLLVGEAAARFAEAMGHKKEVHSLSTTLDVLLPWLLGKCQPNFWRNVRPLANDSCGTFSPLPQEQHQREMRQEYPIEPGHHDQVGFLALDTEGHLHAASLSSGARFRIPGRVGDAAVPGAGIYADNQVGGALATGDGDVLMRFLPALLAVEALRAGQSPASAAEAVMRRLLRHHTEFNGGLVVVSRGGVYSAACAGLDEFQFVVSGESSGRSMRRVEGIKCLDRHEVVTGGPRGNFYVVPKKIWAAGGEDVLVQRVEKITLNEGVDSREFEEEYVEDKAAEIDVDEGEKAEEVRSLLDESPGDLLLHQLGLAPPFPFRFPFIYF.

Positions 1 to 20 (MRYLCRAQLLSLLLLPLLKA) are cleaved as a signal peptide. Cystine bridges form between cysteine 72-cysteine 78, cysteine 172-cysteine 188, and cysteine 327-cysteine 354.

The protein belongs to the Ntn-hydrolase family.

The polypeptide is L-asparaginase-like protein GA18140 (Drosophila pseudoobscura pseudoobscura (Fruit fly)).